We begin with the raw amino-acid sequence, 283 residues long: Cyclin-C (283 aa).

Residues 46–144 (NVIQALGEHL…ILECEFYLLE (99 aa)) enclose the Cyclin N-terminal domain. The disordered stretch occupies residues 252-283 (TILNKMPKPKPPPNSEGEQGTNGSQSSGYSQS). Over residues 267–283 (EGEQGTNGSQSSGYSQS) the composition is skewed to polar residues.

The protein belongs to the cyclin family. Cyclin C subfamily. In terms of assembly, component of the Mediator complex. The cylin/CDK pair formed by ccnc/cdk8 also associates with the large subunit of RNA polymerase II.

It localises to the nucleus. Functionally, component of the Mediator complex, a coactivator involved in regulated gene transcription of nearly all RNA polymerase II-dependent genes. Mediator functions as a bridge to convey information from gene-specific regulatory proteins to the basal RNA polymerase II transcription machinery. Mediator is recruited to promoters by direct interactions with regulatory proteins and serves as a scaffold for the assembly of a functional preinitiation complex with RNA polymerase II and the general transcription factors. Binds to and activates cyclin-dependent kinase cdk8 that phosphorylates the CTD (C-terminal domain) of the large subunit of RNA polymerase II (RNAp II), which may inhibit the formation of a transcription initiation complex. This Xenopus tropicalis (Western clawed frog) protein is Cyclin-C (ccnc).